Here is a 95-residue protein sequence, read N- to C-terminus: MVRIRLTRMGKKKQPFYRIVVVDQRKRRDGAYIESLGYYDPIKDPYILNVDVDKAVDWILKGAQPSQTVKNLLRKAGVFKKVDEIKRTKKKEENQ.

This sequence belongs to the bacterial ribosomal protein bS16 family.

In Thermosipho melanesiensis (strain DSM 12029 / CIP 104789 / BI429), this protein is Small ribosomal subunit protein bS16.